We begin with the raw amino-acid sequence, 409 residues long: Serine/threonine transporter SstT (409 aa).

The next 9 helical transmembrane spans lie at 14–34 (GSLVLQILVGIIAGIIVATLS), 48–68 (FVGALKAIAPILVFILVAASI), 82–102 (IVILYLFGTFAAAVTAVLMSF), 141–161 (ALMTGNYIGILAWGVGLGLAL), 192–212 (IGIFGLVSSTFASTGFSAIAG), 216–236 (LLLVLLGAMAIMALIINPAIV), 290–310 (IPLGATINMGGAAITITILTL), 322–342 (ILTAILLSVVAGISACGASGV), and 357–377 (FGISNDIAMQVVAVGFIIGVI).

The protein belongs to the dicarboxylate/amino acid:cation symporter (DAACS) (TC 2.A.23) family.

Its subcellular location is the cell inner membrane. The catalysed reaction is L-serine(in) + Na(+)(in) = L-serine(out) + Na(+)(out). It catalyses the reaction L-threonine(in) + Na(+)(in) = L-threonine(out) + Na(+)(out). In terms of biological role, involved in the import of serine and threonine into the cell, with the concomitant import of sodium (symport system). In Shewanella woodyi (strain ATCC 51908 / MS32), this protein is Serine/threonine transporter SstT.